The chain runs to 332 residues: DNA-directed RNA polymerase subunit alpha (332 aa).

Positions 1 to 234 (MTVTVSQVLR…DQLSVFGDFT (234 aa)) are alpha N-terminal domain (alpha-NTD). Residues 248-332 (VDPVLLRPID…PGVSQYGMLG (85 aa)) are alpha C-terminal domain (alpha-CTD).

This sequence belongs to the RNA polymerase alpha chain family. In terms of assembly, homodimer. The RNAP catalytic core consists of 2 alpha, 1 beta, 1 beta' and 1 omega subunit. When a sigma factor is associated with the core the holoenzyme is formed, which can initiate transcription.

The enzyme catalyses RNA(n) + a ribonucleoside 5'-triphosphate = RNA(n+1) + diphosphate. DNA-dependent RNA polymerase catalyzes the transcription of DNA into RNA using the four ribonucleoside triphosphates as substrates. This chain is DNA-directed RNA polymerase subunit alpha, found in Xylella fastidiosa (strain M23).